The following is a 143-amino-acid chain: Ribosome maturation factor RimP (143 aa).

The protein belongs to the RimP family.

The protein localises to the cytoplasm. Its function is as follows. Required for maturation of 30S ribosomal subunits. The protein is Ribosome maturation factor RimP of Borrelia turicatae (strain 91E135).